The primary structure comprises 514 residues: Anthranilate synthase component 1 (514 aa).

Residues Thr-40 and Pro-290–Met-292 contribute to the L-tryptophan site. Chorismate is bound at residue Gly-327–Thr-328. Glu-360 is a binding site for Mg(2+). Chorismate is bound by residues Tyr-448, Arg-468, Gly-482–Gly-484, and Gly-484. Residue Glu-497 participates in Mg(2+) binding.

This sequence belongs to the anthranilate synthase component I family. As to quaternary structure, heterotetramer consisting of two non-identical subunits: a beta subunit (TrpG) and a large alpha subunit (TrpE). Requires Mg(2+) as cofactor.

It catalyses the reaction chorismate + L-glutamine = anthranilate + pyruvate + L-glutamate + H(+). It functions in the pathway amino-acid biosynthesis; L-tryptophan biosynthesis; L-tryptophan from chorismate: step 1/5. Its activity is regulated as follows. Feedback inhibited by tryptophan. Functionally, part of a heterotetrameric complex that catalyzes the two-step biosynthesis of anthranilate, an intermediate in the biosynthesis of L-tryptophan. In the first step, the glutamine-binding beta subunit (TrpG) of anthranilate synthase (AS) provides the glutamine amidotransferase activity which generates ammonia as a substrate that, along with chorismate, is used in the second step, catalyzed by the large alpha subunit of AS (TrpE) to produce anthranilate. In the absence of TrpG, TrpE can synthesize anthranilate directly from chorismate and high concentrations of ammonia. In Buchnera aphidicola subsp. Rhopalosiphum padi, this protein is Anthranilate synthase component 1 (trpE).